A 193-amino-acid polypeptide reads, in one-letter code: Superoxide dismutase [Fe] (193 aa).

Fe cation contacts are provided by H27, H74, D157, and H161.

It belongs to the iron/manganese superoxide dismutase family. In terms of assembly, homodimer. Fe cation is required as a cofactor.

It catalyses the reaction 2 superoxide + 2 H(+) = H2O2 + O2. Destroys superoxide anion radicals which are normally produced within the cells and which are toxic to biological systems. The chain is Superoxide dismutase [Fe] (sodB) from Coxiella burnetii (strain RSA 493 / Nine Mile phase I).